The sequence spans 403 residues: Tyrosine--tRNA ligase (403 aa).

The 'HIGH' region motif lies at 42-51; it reads PTAPDLHLGH. Positions 226–230 match the 'KMSKS' region motif; the sequence is KMSKS. Residue K229 coordinates ATP. Residues 339 to 400 enclose the S4 RNA-binding domain; that stretch reads LRIASLLTAA…GKRNFARVSL (62 aa).

Belongs to the class-I aminoacyl-tRNA synthetase family. TyrS type 2 subfamily. As to quaternary structure, homodimer.

The protein resides in the cytoplasm. The enzyme catalyses tRNA(Tyr) + L-tyrosine + ATP = L-tyrosyl-tRNA(Tyr) + AMP + diphosphate + H(+). In terms of biological role, catalyzes the attachment of tyrosine to tRNA(Tyr) in a two-step reaction: tyrosine is first activated by ATP to form Tyr-AMP and then transferred to the acceptor end of tRNA(Tyr). This is Tyrosine--tRNA ligase from Xanthomonas oryzae pv. oryzae (strain MAFF 311018).